A 619-amino-acid chain; its full sequence is Sodium-coupled monocarboxylate transporter 2 (619 aa).

The Extracellular segment spans residues 1 to 9 (MRVKNFEAW). The helical transmembrane segment at 10–30 (DYVVFAGLFVISSGIGVFFAI) threads the bilayer. Topologically, residues 31-47 (KERKKTTSREFLVGGRQ) are cytoplasmic. A helical transmembrane segment spans residues 48–68 (MSFGPVALSLTASFMSAVTVL). Topologically, residues 69 to 80 (GTPAEVYRFGAS) are extracellular. A helical transmembrane segment spans residues 81–101 (FFLFLISYVFVVFFTSELFLP). Residues 102-128 (VFYRSGITSTYEYLQLRFNKPVRYAAT) are Cytoplasmic-facing. Residues 129–149 (IIYIVQTILYTGVVVYAPALA) form a helical membrane-spanning segment. Topologically, residues 150–157 (LNQVTGFN) are extracellular. A helical transmembrane segment spans residues 158–178 (LWASVFATGIVCTFYCSLGGL). Topologically, residues 179-180 (KA) are cytoplasmic. The helical transmembrane segment at 181–201 (VVWTDAFQMVVMIVGFLTVLI) threads the bilayer. Over 202–235 (QGSNHVGGFNNVLEKAGNGSRLHIVDFDVDPLRR) the chain is Extracellular. A glycan (N-linked (GlcNAc...) asparagine) is linked at N219. The helical transmembrane segment at 236–256 (HTFWTITIGGTFTWLGVYGVN) threads the bilayer. Topologically, residues 257-275 (QSTIQRCISCKTEKHAKLA) are cytoplasmic. The chain crosses the membrane as a helical span at residues 276-296 (LYFNLLGLWIIVACAVFSGLI). Residues 297-321 (MYSHFKDCDPWTSGVISAPDQLMPY) are Extracellular-facing. A helical transmembrane segment spans residues 322–342 (FVMEIFATMPGLPGLFVACAF). The Cytoplasmic portion of the chain corresponds to 343 to 385 (SGTLSTVAASINALATVTFEDFVKSCFPHLSDKLSTWISKGLC). Residues 386–406 (ILFGIMCTSMAVVASLMGSVV) form a helical membrane-spanning segment. Residues 407 to 411 (QAALS) are Extracellular-facing. Residues 412 to 432 (IHGMCGGPMLGLFTLGLVFPF) form a helical membrane-spanning segment. The Cytoplasmic segment spans residues 433–437 (VNWKG). A helical transmembrane segment spans residues 438–458 (ALGGLLTGITLSFWVAIGSFI). At 459–504 (YPAPESKTLPLPLSTEHCVELNITTTVAPQISSRPVLADTWYSLSY) the chain is on the extracellular side. Residue N480 is glycosylated (N-linked (GlcNAc...) asparagine). The chain crosses the membrane as a helical span at residues 505-525 (LYFSAVGCLGCIAAGIIISFL). The Cytoplasmic segment spans residues 526–619 (TGKQRGKDID…NSVPEKTTYF (94 aa)).

Belongs to the sodium:solute symporter (SSF) (TC 2.A.21) family. Expressed in the cortical region of the kidney corresponding to the proximal tubule. Expressed in Mueller cells of the inner retina (at protein level). Isoform 1 is expressed in the retina, kidney, small intestine and skeletal muscle. Isoform 2 is not detected in the kidney, small intestine and skeletal muscle. In the kidney, expressed predominantly in tubular epithelial cells of the cortical region and in the convoluted portions of the proximal tubule (pars convoluta). In the small intestine, its expression is highest in the proximal part and gradually decreased towards the distal end. Expressed in the neural retina. Not detected in the caecum and colon.

It localises to the apical cell membrane. It catalyses the reaction (S)-lactate(out) + Na(+)(out) = (S)-lactate(in) + Na(+)(in). The catalysed reaction is nicotinate(out) + Na(+)(out) = nicotinate(in) + Na(+)(in). It carries out the reaction pyruvate(out) + Na(+)(out) = pyruvate(in) + Na(+)(in). The enzyme catalyses propanoate(out) + Na(+)(out) = propanoate(in) + Na(+)(in). It catalyses the reaction butanoate(out) + Na(+)(out) = butanoate(in) + Na(+)(in). The catalysed reaction is acetoacetate(out) + Na(+)(out) = acetoacetate(in) + Na(+)(in). Functionally, acts as an electroneutral and low-affinity sodium (Na(+))-dependent sodium-coupled solute transporter. Catalyzes the transport across the plasma membrane of many monocarboxylates such as lactate, pyruvate, nicotinate, propionate, butyrate and beta-D-hydroxybutyrate. May be responsible for the first step of reabsorption of monocarboxylates from the lumen of the proximal tubule of the kidney and the small intestine. May play also a role in monocarboxylates transport in the retina. Mediates electroneutral uptake of lactate, with a stoichiometry of 2 Na(+) for each lactate. In Mus musculus (Mouse), this protein is Sodium-coupled monocarboxylate transporter 2 (Slc5a12).